The chain runs to 608 residues: Protein Spindly (608 aa).

Met-1 is subject to N-acetylmethionine. The stretch at 1-445 (MEADITNLRN…LKLKYEPEER (445 aa)) forms a coiled coil. Residues 465-487 (PEETEETAAASATEDGVSRLPPH) are disordered. Phosphoserine occurs at positions 516, 518, and 558.

Belongs to the Spindly family. Interacts with KNTC1 and ZW10. These interactions appear weak and may be transient or indirect. Interacts with dynein intermediate chain and dynactin (DCTN1). Interacts with the catalytically active form of USP45. In terms of processing, monoubiquitinated with'Lys-48' linkage. Deubiquitinated by USP45.

It is found in the cytoplasm. Its subcellular location is the cytoskeleton. It localises to the microtubule organizing center. The protein localises to the centrosome. The protein resides in the chromosome. It is found in the centromere. Its subcellular location is the kinetochore. It localises to the nucleus. The protein localises to the spindle pole. Required for the localization of dynein and dynactin to the mitotic kintochore. Dynein is believed to control the initial lateral interaction between the kinetochore and spindle microtubules and to facilitate the subsequent formation of end-on kinetochore-microtubule attachments mediated by the NDC80 complex. Also required for correct spindle orientation. Does not appear to be required for the removal of spindle assembly checkpoint (SAC) proteins from the kinetochore upon bipolar spindle attachment. Acts as an adapter protein linking the dynein motor complex to various cargos and converts dynein from a non-processive to a highly processive motor in the presence of dynactin. Facilitates the interaction between dynein and dynactin and activates dynein processivity (the ability to move along a microtubule for a long distance without falling off the track). Plays a role in cell migration. The polypeptide is Protein Spindly (Spdl1) (Mus musculus (Mouse)).